The primary structure comprises 142 residues: Pro-Viral epidermal growth factor (142 aa).

An N-terminal signal peptide occupies residues 1-19 (MSIKYLMLLFAAMIIRSLA). Residues 20 to 104 (DSGNAIETTS…DTTTSYIPSL (85 aa)) lie on the Extracellular side of the membrane. A glycan (N-linked (GlcNAc...) asparagine; by host) is linked at Asn34. Cys71 and Cys80 are disulfide-bonded. The helical transmembrane segment at 105 to 125 (GIVLVLVGIIITCCLLSVYMF) threads the bilayer. The Cytoplasmic segment spans residues 126 to 142 (TRRTKLPIQDMVVLYFL).

This sequence belongs to the orthopoxvirus OPG019 family. As to quaternary structure, interacts with host EGFR. Cleaved at the cell surface by host ADAM10, thereby releasing the secreted form of VGF.

Its subcellular location is the host membrane. It localises to the secreted. Its function is as follows. Stimulates cellular proliferation (hyperplasia)and mobility around infected cells to promote rapid and efficient spread of infection. This effect is beneficial for virus replication in vivo, because poxviruses replicate possibly better in proliferating cells than in quiescent cells. Acts by binding host EGFR, inducing its dimerization, autophosphorylation and leading to activation of several cellular pathways regulating cell proliferation or cell survival. The activation by host EGFR of mitogen activated protein kinases (MAPK) and extracellular-signal regulated kinases (ERK) are essential for the positive effect of vaccinia growth factor on poxvirus virulence in vivo. In Cynomys gunnisoni (Gunnison's prairie dog), this protein is Pro-Viral epidermal growth factor (OPG019).